Reading from the N-terminus, the 635-residue chain is Iron transport multicopper oxidase FET3 (635 aa).

Residues 1-17 (MMVPLLLSTYFITAVYG) form the signal peptide. Residues 18 to 559 (ATHTFHWTTG…KSIPTGFTKK (542 aa)) are Extracellular-facing. Plastocyanin-like domains lie at 42–140 (ITCN…FVIE) and 190–292 (NLIL…LQLN). N-linked (GlcNAc...) asparagine glycans are attached at residues Asn-70 and Asn-73. Cu cation-binding residues include His-77 and His-79. The N-linked (GlcNAc...) asparagine glycan is linked to Asn-109. Cu cation contacts are provided by His-122 and His-124. N-linked (GlcNAc...) asparagine glycans are attached at residues Asn-194, Asn-198, Asn-244, Asn-265, Asn-292, and Asn-359. The region spanning 382–501 (NPFIYGTNTN…QGLAVVMVED (120 aa)) is the Plastocyanin-like 3 domain. Residues His-413, His-416, and His-418 each contribute to the Cu cation site. A glycan (N-linked (GlcNAc...) asparagine) is linked at Asn-443. The Cu cation site is built by His-483, Cys-484, His-485, and His-489. Asn-535 is a glycosylation site (N-linked (GlcNAc...) asparagine). A helical membrane pass occupies residues 560–580 (GIIAMTFSCLAGVLGITMIAI). Residues 581–628 (YGFSEIPEPEIKVMRNLHLNPEDVLEKTSSSSVISASNSSSLEDSRNQ) are Cytoplasmic-facing.

Belongs to the multicopper oxidase family. The cofactor is Cu cation.

Its subcellular location is the cell membrane. Iron transport multicopper ferroxidase required for Fe(2+) high affinity uptake. Required to oxidize Fe(2+) and release it from the transporter. Essential component of copper-dependent iron transport. In Candida glabrata (strain ATCC 2001 / BCRC 20586 / JCM 3761 / NBRC 0622 / NRRL Y-65 / CBS 138) (Yeast), this protein is Iron transport multicopper oxidase FET3 (FET3).